We begin with the raw amino-acid sequence, 218 residues long: Small ribosomal subunit protein uS3c (218 aa).

In terms of domain architecture, KH type-2 spans 47-118 (VQKEMRISSG…RLNVVITRVA (72 aa)).

This sequence belongs to the universal ribosomal protein uS3 family. In terms of assembly, part of the 30S ribosomal subunit.

Its subcellular location is the plastid. It localises to the chloroplast. The chain is Small ribosomal subunit protein uS3c (rps3) from Ceratophyllum demersum (Rigid hornwort).